Here is a 370-residue protein sequence, read N- to C-terminus: F-box protein At3g20690 (370 aa).

Residues 1–45 enclose the F-box domain; the sequence is MMMSDLPHDLVEEILSRLPLISLKAMRSTCKTWNVLSKHRSFANK.

The protein is F-box protein At3g20690 of Arabidopsis thaliana (Mouse-ear cress).